Reading from the N-terminus, the 256-residue chain is MLTYPNINPIAFSLGPLKVHWYGLMYLIGFVGAWLLGYWRIKHYKLNWNNDQLSDLIFYSALGVILGGRVGYMLFYDFQEFIHHPWVLFKIWEGGMSFHGGLLGVVIAAWLFCRKYGKTFLEVGDFVAPLVPLGLAAGRLGNFINGELWGRVTDVPWGMIYPHVDDQPRHPSQLYEFGLEGVALFILIWCYASKPRQQGRVSALFLMGYAICRLIAESFRQPDSQLGFVAFGWLTMGQVLSIPMLLIGIWLWWAKR.

3 helical membrane-spanning segments follow: residues 19–39 (VHWY…LGYW), 56–76 (LIFY…MLFY), and 91–111 (IWEG…AAWL). Position 139 (arginine 139) interacts with a 1,2-diacyl-sn-glycero-3-phospho-(1'-sn-glycerol). Residues 231–251 (FGWLTMGQVLSIPMLLIGIWL) traverse the membrane as a helical segment.

This sequence belongs to the Lgt family.

The protein resides in the cell inner membrane. It catalyses the reaction L-cysteinyl-[prolipoprotein] + a 1,2-diacyl-sn-glycero-3-phospho-(1'-sn-glycerol) = an S-1,2-diacyl-sn-glyceryl-L-cysteinyl-[prolipoprotein] + sn-glycerol 1-phosphate + H(+). The protein operates within protein modification; lipoprotein biosynthesis (diacylglyceryl transfer). In terms of biological role, catalyzes the transfer of the diacylglyceryl group from phosphatidylglycerol to the sulfhydryl group of the N-terminal cysteine of a prolipoprotein, the first step in the formation of mature lipoproteins. This chain is Phosphatidylglycerol--prolipoprotein diacylglyceryl transferase, found in Legionella pneumophila subsp. pneumophila (strain Philadelphia 1 / ATCC 33152 / DSM 7513).